A 344-amino-acid chain; its full sequence is L-rhamnose-proton symporter (344 aa).

The next 10 helical transmembrane spans lie at 4–24, 38–58, 68–88, 101–121, 137–157, 175–195, 207–227, 259–279, 290–310, and 321–341; these read AIIL…CFYA, WSIG…YLLL, FSIA…IGNI, MGIG…TPIL, TLLG…AGLL, LILA…MDAA, INSL…GAII, ILFS…YAWG, MSWM…GLLL, and VAVL…VGLG.

It belongs to the L-rhamnose transporter (TC 2.A.7.6) family.

The protein localises to the cell inner membrane. It carries out the reaction L-rhamnopyranose(in) + H(+)(in) = L-rhamnopyranose(out) + H(+)(out). Functionally, uptake of L-rhamnose across the cytoplasmic membrane with the concomitant transport of protons into the cell (symport system). This Yersinia pseudotuberculosis serotype O:1b (strain IP 31758) protein is L-rhamnose-proton symporter.